A 117-amino-acid chain; its full sequence is Ribosome-binding factor A (117 aa).

The protein belongs to the RbfA family. Monomer. Binds 30S ribosomal subunits, but not 50S ribosomal subunits or 70S ribosomes.

The protein resides in the cytoplasm. In terms of biological role, one of several proteins that assist in the late maturation steps of the functional core of the 30S ribosomal subunit. Associates with free 30S ribosomal subunits (but not with 30S subunits that are part of 70S ribosomes or polysomes). Required for efficient processing of 16S rRNA. May interact with the 5'-terminal helix region of 16S rRNA. The protein is Ribosome-binding factor A of Streptococcus thermophilus (strain CNRZ 1066).